The chain runs to 556 residues: Glutamine--tRNA ligase (556 aa).

A 'HIGH' region motif is present at residues 35 to 45 (PEPNGYLHIGH). ATP-binding positions include 36–38 (EPN) and 42–48 (HIGHAKS). L-glutamine-binding residues include Asp68 and Tyr213. ATP-binding positions include Thr232 and 262–263 (RL). The 'KMSKS' region motif lies at 269–273 (VTSKR).

The protein belongs to the class-I aminoacyl-tRNA synthetase family. Monomer.

It is found in the cytoplasm. It carries out the reaction tRNA(Gln) + L-glutamine + ATP = L-glutaminyl-tRNA(Gln) + AMP + diphosphate. The polypeptide is Glutamine--tRNA ligase (Pseudomonas aeruginosa (strain LESB58)).